Reading from the N-terminus, the 287-residue chain is Putative glutamate--cysteine ligase regulatory subunit (287 aa).

The protein belongs to the aldo/keto reductase family. Glutamate--cysteine ligase light chain subfamily. In terms of assembly, heterodimer of a catalytic heavy chain and a regulatory light chain.

The protein localises to the cytoplasm. It participates in sulfur metabolism; glutathione biosynthesis; glutathione from L-cysteine and L-glutamate: step 1/2. The polypeptide is Putative glutamate--cysteine ligase regulatory subunit (Schizosaccharomyces pombe (strain 972 / ATCC 24843) (Fission yeast)).